A 359-amino-acid chain; its full sequence is MMAGCGEIDHSINMLPTNRKANESCSNTAPSLTVPECAICLQTCVHPVSLPCKHVFCYLCVKGASWLGKRCALCRQEIPEDFLDKPTLLSPEELKAASRGNGEYAWYYEGRNGWWQYDERTSRELEDAFSKGKKNTEMLIAGFLYVADLENMVQYRRNEHGRRRKIKRDIIDIPKKGVAGLRLDCDANTVNLARESSADGADSVSAQSGASVQPLVSSVRPLTSVDGQLTSPATPSPDASTSLEDSFAHLQLSGDNTAERSHRGEGEEDHESPSSGRVPAPDTSIEETESDASSDSEDVSAVVAQHSLTQQRLLVSNANQTVPDRSDRSGTDRSVAGGGTVSVSVRSRRPDGQCTVTEV.

Residues 37–75 (CAICLQTCVHPVSLPCKHVFCYLCVKGASWLGKRCALCR) form an RING-type zinc finger. Residues K85 and K95 each participate in a glycyl lysine isopeptide (Lys-Gly) (interchain with G-Cter in ubiquitin) cross-link. Residues 92 to 168 (EELKAASRGN…EHGRRRKIKR (77 aa)) form the WWE domain. Residues Y108, R111, and W115 each coordinate a glycoprotein. K131 participates in a covalent cross-link: Glycyl lysine isopeptide (Lys-Gly) (interchain with G-Cter in ubiquitin). A glycoprotein is bound by residues Y145, Q154, R164, and K176. K176 is covalently cross-linked (Glycyl lysine isopeptide (Lys-Gly) (interchain with G-Cter in ubiquitin)). A disordered region spans residues 254–359 (GDNTAERSHR…PDGQCTVTEV (106 aa)). The segment covering 284 to 298 (SIEETESDASSDSED) has biased composition (acidic residues). Phosphoserine occurs at positions 290 and 294. Polar residues predominate over residues 306–323 (HSLTQQRLLVSNANQTVP).

As to quaternary structure, can form homooligomers. Interacts with PARsylated AXIN1, AXIN2, BLZF1, CASC3, H1-2, IPO7, LIG3, NCL, PARP1, XRCC1, XRCC5 and XRCC6. Interacts with DDB1, DHX15, IQGAP1, LRPPRC, PARP2, PRKDC, RUVBL2, TNKS1 and TNKS2. Binding often leads to interactor ubiquitination, in the presence of the appropriate E1 and E2 enzymes, and proteasomal degradation. Ubiquitinated; autoubiquitinated. Polyubiquitinated in the presence of UBE2D1, UBE2D2 and UBE2D3. Multimonoubiquitinated in the presence of UBE2E1. Not ubiquitinated in the presence of UBE2H, CDC34, UBE2L3, UBE2L6, nor UBE2C. In the absence of PAR, autoubiquitination occurs on Lys-85, Lys-95 and Lys-176 via 'Lys-11' and 'Lys-48' ubiquitin linkages. In the presence of PAR, Lys-131 and Lys-176 are ubiquitinated via 'Lys-6', 'Lys-33' and 'Lys-48' ubiquitin linkages. Autoubiquitination is enhanced upon PAR-binding. Ubiquitously expressed. Up-regulated in brains from patients with Alzheimer disease.

It localises to the cytoplasm. The protein resides in the cytosol. It is found in the nucleus. The enzyme catalyses S-ubiquitinyl-[E2 ubiquitin-conjugating enzyme]-L-cysteine + [acceptor protein]-L-lysine = [E2 ubiquitin-conjugating enzyme]-L-cysteine + N(6)-ubiquitinyl-[acceptor protein]-L-lysine.. It functions in the pathway protein modification; protein ubiquitination. In terms of biological role, E3 ubiquitin-protein ligase that specifically binds poly-ADP-ribosylated (PARsylated) proteins and mediates their ubiquitination and subsequent degradation. May regulate many important biological processes, such as cell survival and DNA damage response. Acts as an activator of the Wnt signaling pathway by mediating the ubiquitination of PARsylated AXIN1 and AXIN2, 2 key components of the beta-catenin destruction complex. Acts in cooperation with tankyrase proteins (TNKS and TNKS2), which mediate PARsylation of target proteins AXIN1, AXIN2, BLZF1, CASC3, TNKS and TNKS2. Recognizes and binds tankyrase-dependent PARsylated proteins via its WWE domain and mediates their ubiquitination, leading to their degradation. Different ubiquitin linkage types have been observed: TNKS2 undergoes ubiquitination at 'Lys-48' and 'Lys-63', while AXIN1 is only ubiquitinated at 'Lys-48'. May regulate TNKS and TNKS2 subcellular location, preventing aggregation at a centrosomal location. Neuroprotective protein. Protects the brain against N-methyl-D-aspartate (NMDA) receptor-mediated glutamate excitotoxicity and ischemia, by interfering with PAR-induced cell death, called parthanatos. Prevents nuclear translocation of AIFM1 in a PAR-binding dependent manner. Does not affect PARP1 activation. Protects against cell death induced by DNA damaging agents, such as N-methyl-N-nitro-N-nitrosoguanidine (MNNG) and rescues cells from G1 arrest. Promotes cell survival after gamma-irradiation. Facilitates DNA repair. This chain is E3 ubiquitin-protein ligase RNF146 (RNF146), found in Homo sapiens (Human).